A 1895-amino-acid polypeptide reads, in one-letter code: Diacylglycerol kinase eta (1895 aa).

The span at 1–10 shows a compositional bias: basic and acidic residues; sequence MAHLKLDTLH. Residues 1–37 form a disordered region; the sequence is MAHLKLDTLHVQRSPRGSRRSSPSSGRSSACSSGSIS. Residues 20–37 are compositionally biased toward low complexity; sequence RSSPSSGRSSACSSGSIS. A PH domain is found at 82 to 175; that stretch reads AIIKEGFLLK…WLGSLKTATA (94 aa). 2 Phorbol-ester/DAG-type zinc fingers span residues 195–245 and 267–318; these read HHHW…IANC and PHQW…AVAC. The DAGKc domain occupies 349–485; that stretch reads GNFSPLLVFV…DRWSIMVFEK (137 aa). Disordered regions lie at residues 781 to 801, 1012 to 1053, 1113 to 1137, and 1172 to 1191; these read ANIDDAGNRLSPCSDAGENTP, TTLC…MARL, QHRGGDNDSDYPEHEQTPTNKGANL, and PNTILTTSTSPTKKSGHGQD. Residues 1113–1128 show a composition bias toward basic and acidic residues; sequence QHRGGDNDSDYPEHEQ. Positions 1172–1184 are enriched in polar residues; that stretch reads PNTILTTSTSPTK. An SAM domain is found at 1832–1895; it reads WSVNEVVTWL…LQAIKDLSEN (64 aa).

This sequence belongs to the eukaryotic diacylglycerol kinase family.

Its subcellular location is the cytoplasm. The enzyme catalyses a 1,2-diacyl-sn-glycerol + ATP = a 1,2-diacyl-sn-glycero-3-phosphate + ADP + H(+). Phosphorylates diacylglycerol (DAG) to generate phosphatidic acid (PA). This is Diacylglycerol kinase eta from Drosophila melanogaster (Fruit fly).